A 334-amino-acid chain; its full sequence is Holliday junction branch migration complex subunit RuvB (334 aa).

The interval 1-182 (MDDRMIDGEL…FGVLSRLEYY (182 aa)) is large ATPase domain (RuvB-L). Residues leucine 21, arginine 22, glycine 63, lysine 66, threonine 67, threonine 68, 129-131 (EDF), arginine 172, tyrosine 182, and arginine 219 each bind ATP. Threonine 67 lines the Mg(2+) pocket. Residues 183-253 (EIKDLCNIVE…STKQALEMLQ (71 aa)) are small ATPAse domain (RuvB-S). The tract at residues 256-334 (DAGLDHVDHK…HLGIKRTGED (79 aa)) is head domain (RuvB-H). The DNA site is built by arginine 311 and arginine 316.

Belongs to the RuvB family. As to quaternary structure, homohexamer. Forms an RuvA(8)-RuvB(12)-Holliday junction (HJ) complex. HJ DNA is sandwiched between 2 RuvA tetramers; dsDNA enters through RuvA and exits via RuvB. An RuvB hexamer assembles on each DNA strand where it exits the tetramer. Each RuvB hexamer is contacted by two RuvA subunits (via domain III) on 2 adjacent RuvB subunits; this complex drives branch migration. In the full resolvosome a probable DNA-RuvA(4)-RuvB(12)-RuvC(2) complex forms which resolves the HJ.

The protein localises to the cytoplasm. It catalyses the reaction ATP + H2O = ADP + phosphate + H(+). The RuvA-RuvB-RuvC complex processes Holliday junction (HJ) DNA during genetic recombination and DNA repair, while the RuvA-RuvB complex plays an important role in the rescue of blocked DNA replication forks via replication fork reversal (RFR). RuvA specifically binds to HJ cruciform DNA, conferring on it an open structure. The RuvB hexamer acts as an ATP-dependent pump, pulling dsDNA into and through the RuvAB complex. RuvB forms 2 homohexamers on either side of HJ DNA bound by 1 or 2 RuvA tetramers; 4 subunits per hexamer contact DNA at a time. Coordinated motions by a converter formed by DNA-disengaged RuvB subunits stimulates ATP hydrolysis and nucleotide exchange. Immobilization of the converter enables RuvB to convert the ATP-contained energy into a lever motion, pulling 2 nucleotides of DNA out of the RuvA tetramer per ATP hydrolyzed, thus driving DNA branch migration. The RuvB motors rotate together with the DNA substrate, which together with the progressing nucleotide cycle form the mechanistic basis for DNA recombination by continuous HJ branch migration. Branch migration allows RuvC to scan DNA until it finds its consensus sequence, where it cleaves and resolves cruciform DNA. This Oceanobacillus iheyensis (strain DSM 14371 / CIP 107618 / JCM 11309 / KCTC 3954 / HTE831) protein is Holliday junction branch migration complex subunit RuvB.